The following is a 61-amino-acid chain: Alpha-conotoxin PnIB (61 aa).

The N-terminal stretch at 1 to 21 (MGMRMMFTVFLLVVLATTVVS) is a signal peptide. Positions 22 to 44 (FTSDRASDDGNAAASDLIALTIK) are excised as a propeptide. 2 cysteine pairs are disulfide-bonded: Cys46–Cys52 and Cys47–Cys60. The segment at 48–50 (SLP) is ser-Xaa-Pro motif, crucial for potent interaction with nAChR. Tyr59 is subject to Sulfotyrosine. Residue Cys60 is modified to Cysteine amide.

This sequence belongs to the conotoxin A superfamily. In terms of tissue distribution, expressed by the venom duct.

It is found in the secreted. Its function is as follows. Alpha-conotoxins act on postsynaptic membranes, they bind to the nicotinic acetylcholine receptors (nAChR) and thus inhibit them. This toxin blocks mammalian nAChRs (alpha-7/CHRNA7 &gt; alpha-3-beta-2/CHRNA3-CHRNB2). The chain is Alpha-conotoxin PnIB from Conus pennaceus (Feathered cone).